We begin with the raw amino-acid sequence, 341 residues long: Keratin-associated protein 29-1 (341 aa).

Tandem repeats lie at residues 5–9 (CCPGN), 115–119 (CCQEK), 120–124 (CCDAS), 150–154 (CCDAG), 240–244 (CCVPS), 276–280 (CCKPA), and 307–311 (CCVTG). The tract at residues 5–311 (CCPGNTTAIP…GCKSACCVTG (307 aa)) is 7 X 5 AA repeats of C-C-X(3).

Belongs to the KRTAP type 10 family.

This Homo sapiens (Human) protein is Keratin-associated protein 29-1 (KRTAP29-1).